The following is a 317-amino-acid chain: Putative ribose-phosphate pyrophosphokinase (317 aa).

The interval 211–224 (GRDVIVLDDEIAKG) is binding of phosphoribosylpyrophosphate.

The protein belongs to the ribose-phosphate pyrophosphokinase family.

It catalyses the reaction D-ribose 5-phosphate + ATP = 5-phospho-alpha-D-ribose 1-diphosphate + AMP + H(+). The polypeptide is Putative ribose-phosphate pyrophosphokinase (Streptomyces coelicolor (strain ATCC BAA-471 / A3(2) / M145)).